The following is a 304-amino-acid chain: Nucleotide-binding protein KRH_12070 (304 aa).

27 to 34 (GMSGAGRS) provides a ligand contact to ATP. 78-81 (DVRG) serves as a coordination point for GTP.

It belongs to the RapZ-like family.

Displays ATPase and GTPase activities. This is Nucleotide-binding protein KRH_12070 from Kocuria rhizophila (strain ATCC 9341 / DSM 348 / NBRC 103217 / DC2201).